Reading from the N-terminus, the 229-residue chain is AA9 family lytic polysaccharide monooxygenase E (229 aa).

Positions 1–19 (MRSSDITFVLLSVVATVRS) are cleaved as a signal peptide. A Cu(2+)-binding site is contributed by histidine 20. An intrachain disulfide couples cysteine 57 to cysteine 178. Asparagine 76 is a glycosylation site (N-linked (GlcNAc...) asparagine). Histidine 99 contacts Cu(2+). O2 is bound by residues histidine 164 and glutamine 173. Tyrosine 175 provides a ligand contact to Cu(2+). Residue asparagine 217 is glycosylated (N-linked (GlcNAc...) asparagine).

Belongs to the polysaccharide monooxygenase AA9 family. Cu(2+) serves as cofactor.

It is found in the secreted. It catalyses the reaction [(1-&gt;4)-beta-D-glucosyl]n+m + reduced acceptor + O2 = 4-dehydro-beta-D-glucosyl-[(1-&gt;4)-beta-D-glucosyl]n-1 + [(1-&gt;4)-beta-D-glucosyl]m + acceptor + H2O.. In terms of biological role, lytic polysaccharide monooxygenase (LPMO) that depolymerizes crystalline and amorphous polysaccharides via the oxidation of scissile alpha- or beta-(1-4)-glycosidic bonds, yielding C1 and C4 oxidation products. Catalysis by LPMOs requires the reduction of the active-site copper from Cu(II) to Cu(I) by a reducing agent and H(2)O(2) or O(2) as a cosubstrate. The polypeptide is AA9 family lytic polysaccharide monooxygenase E (Botryotinia fuckeliana (strain B05.10) (Noble rot fungus)).